We begin with the raw amino-acid sequence, 416 residues long: UPF0761 membrane protein Mpe_A1422 (416 aa).

A run of 6 helical transmembrane segments spans residues 63 to 83 (IALV…PMFG), 120 to 140 (LGTV…LTID), 159 to 179 (VLVY…SLTL), 198 to 218 (LSVL…AGLF), 234 to 256 (GGLF…LAQV), and 271 to 291 (IFLI…VIAA).

It belongs to the UPF0761 family.

The protein localises to the cell inner membrane. The sequence is that of UPF0761 membrane protein Mpe_A1422 from Methylibium petroleiphilum (strain ATCC BAA-1232 / LMG 22953 / PM1).